Here is a 254-residue protein sequence, read N- to C-terminus: Ciliary microtubule associated protein 1A (254 aa).

STPGR repeat units lie at residues 180-205 and 216-241; these read PGPA…MAAR and PGPG…FGIK. The disordered stretch occupies residues 207–226; sequence EPPGDKTLKPGPGAHSPEKV.

It belongs to the CIMAP family. As to quaternary structure, microtubule inner protein component of sperm flagellar doublet microtubules. Testis-specific.

It is found in the cytoplasm. Its subcellular location is the cytoskeleton. The protein localises to the flagellum axoneme. Its function is as follows. Outer dense fibers are filamentous structures located on the outside of the axoneme in the midpiece and principal piece of the mammalian sperm tail. May help to maintain the passive elastic structures and elastic recoil of the sperm tail. This is Ciliary microtubule associated protein 1A from Homo sapiens (Human).